The sequence spans 425 residues: 1,4-beta-D-glucan glucohydrolase (425 aa).

E164 acts as the Proton donor in catalysis. The Nucleophile role is filled by E349.

It belongs to the glycosyl hydrolase 1 family. As to quaternary structure, monomer.

The enzyme catalyses Hydrolysis of (1-&gt;4)-linkages in (1-&gt;4)-beta-D-glucans, to remove successive glucose units.. The catalysed reaction is Hydrolysis of terminal, non-reducing beta-D-glucosyl residues with release of beta-D-glucose.. Its pathway is glycan metabolism; cellulose degradation. The protein operates within glycan metabolism; beta-D-glucan degradation. Functionally, broad substrate specificity glycosidase. Releases glucose from soluble glucooligomers, with a preference for longer oligomers; acts more readily on cellotetraose than on cellobiose. Displays similar activities towards the disaccharides lactose and cellobiose. Is also able to hydrolyze various aryl-beta-glycosides in vitro. The chain is 1,4-beta-D-glucan glucohydrolase (bglA) from Thermotoga neapolitana.